Consider the following 469-residue polypeptide: Sulfate adenylyltransferase subunit 1 (469 aa).

Residues 22 to 238 form the tr-type G domain; sequence KQLLRFITCG…LETIKIDEDR (217 aa). Residues 31–38 form a G1 region; the sequence is GSVDDGKS. Residue 31–38 participates in GTP binding; it reads GSVDDGKS. The interval 89–93 is G2; that stretch reads GITID. A G3 region spans residues 110–113; it reads DTPG. GTP contacts are provided by residues 110-114 and 165-168; these read DTPGH and NKMD. Positions 165-168 are G4; that stretch reads NKMD. The interval 203-205 is G5; it reads SAL.

Belongs to the TRAFAC class translation factor GTPase superfamily. Classic translation factor GTPase family. CysN/NodQ subfamily. Heterodimer composed of CysD, the smaller subunit, and CysN.

The enzyme catalyses sulfate + ATP + H(+) = adenosine 5'-phosphosulfate + diphosphate. The protein operates within sulfur metabolism; hydrogen sulfide biosynthesis; sulfite from sulfate: step 1/3. Functionally, with CysD forms the ATP sulfurylase (ATPS) that catalyzes the adenylation of sulfate producing adenosine 5'-phosphosulfate (APS) and diphosphate, the first enzymatic step in sulfur assimilation pathway. APS synthesis involves the formation of a high-energy phosphoric-sulfuric acid anhydride bond driven by GTP hydrolysis by CysN coupled to ATP hydrolysis by CysD. The polypeptide is Sulfate adenylyltransferase subunit 1 (Aliarcobacter butzleri (strain RM4018) (Arcobacter butzleri)).